The following is a 699-amino-acid chain: Elongation factor G (699 aa).

The tr-type G domain maps to 8 to 288 (EDYRNFGIMA…AVVDYLPSPV (281 aa)). GTP contacts are provided by residues 17–24 (AHIDAGKT), 86–90 (DTPGH), and 140–143 (NKMD).

This sequence belongs to the TRAFAC class translation factor GTPase superfamily. Classic translation factor GTPase family. EF-G/EF-2 subfamily.

It is found in the cytoplasm. Functionally, catalyzes the GTP-dependent ribosomal translocation step during translation elongation. During this step, the ribosome changes from the pre-translocational (PRE) to the post-translocational (POST) state as the newly formed A-site-bound peptidyl-tRNA and P-site-bound deacylated tRNA move to the P and E sites, respectively. Catalyzes the coordinated movement of the two tRNA molecules, the mRNA and conformational changes in the ribosome. This is Elongation factor G from Sinorhizobium medicae (strain WSM419) (Ensifer medicae).